Consider the following 192-residue polypeptide: tRNA (pseudouridine(54)-N(1))-methyltransferase (192 aa).

The S-adenosyl-L-methionine site is built by Leu114 and Gly138.

Belongs to the methyltransferase superfamily. TrmY family. As to quaternary structure, homodimer.

It is found in the cytoplasm. The catalysed reaction is pseudouridine(54) in tRNA + S-adenosyl-L-methionine = N(1)-methylpseudouridine(54) in tRNA + S-adenosyl-L-homocysteine + H(+). In terms of biological role, specifically catalyzes the N1-methylation of pseudouridine at position 54 (Psi54) in tRNAs. The sequence is that of tRNA (pseudouridine(54)-N(1))-methyltransferase from Aeropyrum pernix (strain ATCC 700893 / DSM 11879 / JCM 9820 / NBRC 100138 / K1).